We begin with the raw amino-acid sequence, 248 residues long: Tryptophan synthase alpha chain (248 aa).

Active-site proton acceptor residues include E36 and D47.

This sequence belongs to the TrpA family. As to quaternary structure, tetramer of two alpha and two beta chains.

The enzyme catalyses (1S,2R)-1-C-(indol-3-yl)glycerol 3-phosphate + L-serine = D-glyceraldehyde 3-phosphate + L-tryptophan + H2O. The protein operates within amino-acid biosynthesis; L-tryptophan biosynthesis; L-tryptophan from chorismate: step 5/5. Its function is as follows. The alpha subunit is responsible for the aldol cleavage of indoleglycerol phosphate to indole and glyceraldehyde 3-phosphate. In Pyrococcus abyssi (strain GE5 / Orsay), this protein is Tryptophan synthase alpha chain.